The sequence spans 393 residues: Heparan sulfate glucosamine 3-O-sulfotransferase 3A1 (393 aa).

Residues 1-24 (MAPSGPTGAQPSPAEPLSRSIFRK) lie on the Cytoplasmic side of the membrane. Residues 25–43 (FLLMLCSLLTSLYVFYCLA) form a helical; Signal-anchor for type II membrane protein membrane-spanning segment. Residues 44–393 (ERCPPGSGPV…MTGRDFGWDG (350 aa)) lie on the Lumenal side of the membrane. Positions 85-121 (QRRRRGRSGPGDSSDQEEQSPGLAAAPGGSGAGSSVA) are disordered. A 3'-phosphoadenylyl sulfate-binding site is contributed by 149-153 (KGGTR). Substrate-binding positions include 171–177 (EPHFFDR) and 202–205 (KTPS). Arginine 230 and serine 238 together coordinate 3'-phosphoadenylyl sulfate. A glycan (N-linked (GlcNAc...) asparagine) is linked at asparagine 260. 270–271 (WS) contributes to the substrate binding site. An N-linked (GlcNAc...) asparagine glycan is attached at asparagine 331. Cysteine 338 and cysteine 350 are disulfide-bonded. 355-359 (KGRAH) provides a ligand contact to 3'-phosphoadenylyl sulfate.

It belongs to the sulfotransferase 1 family.

It is found in the golgi apparatus membrane. The catalysed reaction is alpha-D-glucosaminyl-[heparan sulfate](n) + 3'-phosphoadenylyl sulfate = 3-sulfo-alpha-D-glucosaminyl-[heparan sulfate](n) + adenosine 3',5'-bisphosphate + H(+). In terms of biological role, sulfotransferase that utilizes 3'-phospho-5'-adenylyl sulfate (PAPS) to catalyze the transfer of a sulfo group to an N-unsubstituted glucosamine linked to a 2-O-sulfo iduronic acid unit on heparan sulfate. Catalyzes the O-sulfation of glucosamine in IdoUA2S-GlcNS and also in IdoUA2S-GlcNH2. Unlike HS3ST1/3-OST-1, does not convert non-anticoagulant heparan sulfate to anticoagulant heparan sulfate. The chain is Heparan sulfate glucosamine 3-O-sulfotransferase 3A1 (Hs3st3a1) from Mus musculus (Mouse).